A 309-amino-acid polypeptide reads, in one-letter code: MNRKPGLHPRNRHHSRYDFDALTESCPALGAFVRPSPAGEPTIDFADPQAVKTLNQALLAHFYGVREWDIPDGFLCPPVPGRADYIHHLADLLAEGNGGALPAQASVLDIGVGANCIYPLIGQHEYGWRFTGTDTSDEAIRSASAIIDANPGLNRAIRLRRQKSPGAIFNGIIHKNESYDATLCNPPFHDSADAAEAGNARKRRNLGLAADSGLNFGGQQQELWCEGGEVGFITQMIAESKLFARQVLWFTTLVSKGDNLPLLYRALEQAGAVKVVKKEMAQGQKQSRFIAWSFLDTAQRERWAQNRLR.

The protein belongs to the methyltransferase superfamily. METTL16/RlmF family.

It is found in the cytoplasm. The catalysed reaction is adenosine(1618) in 23S rRNA + S-adenosyl-L-methionine = N(6)-methyladenosine(1618) in 23S rRNA + S-adenosyl-L-homocysteine + H(+). Functionally, specifically methylates the adenine in position 1618 of 23S rRNA. The protein is Ribosomal RNA large subunit methyltransferase F of Cronobacter sakazakii (strain ATCC BAA-894) (Enterobacter sakazakii).